The primary structure comprises 363 residues: 3-methyl-D-ornithine--L-lysine ligase (363 aa).

Lys10 contacts ATP. Residue 11 to 12 participates in L-lysine binding; the sequence is LQ. ATP-binding positions include Asp31, 49–50, and 72–73; these read DV and EN. Glu72 is a binding site for L-lysine. ADP contacts are provided by residues Lys104, Lys131, Ser138, and 160–163; that span reads EEYV. D-ornithine is bound by residues 169–171 and Asp225; that span reads SLE. Residues Glu227, Glu239, and Asp241 each contribute to the Mg(2+) site. Glu239 lines the ADP pocket. Residues 243-248 and Glu302 each bind D-ornithine; that span reads RFPSQT. Residues Ser246 and Glu302 each coordinate L-lysine.

Belongs to the PylC family. The cofactor is Mg(2+).

It catalyses the reaction (3R)-3-methyl-D-ornithine + L-lysine + ATP = (3R)-3-methyl-D-ornithyl-N(6)-L-lysine + ADP + phosphate + H(+). It functions in the pathway amino-acid biosynthesis; L-pyrrolysine biosynthesis. In terms of biological role, is required for the biosynthesis of pyrrolysine. Catalyzes the ATP-dependent ligation between (3R)-3-methyl-D-ornithine and L-lysine, leading to (3R)-3-methyl-D-ornithyl-N6-L-lysine. This is 3-methyl-D-ornithine--L-lysine ligase from Methanosarcina barkeri (strain Fusaro / DSM 804).